The primary structure comprises 225 residues: MSLIVKICGLSTPSTLDVALQAGADMVGFVFFPPSPRHLELARAQELGAQVRGRAAKVALTADADDETLCGIIEALRPDLLQLHGKETVPRIREIKRRFGLPVMKAIGVEIAADLADLPRYAAVADRLLFDARPPKHATRPGGLGVPFDWRLLTNLSVDIPFMLSGGLAAGNVDDAVRITRAGGVDVSSGVESAPGVKDAGMVRDFIRAARAAETSLREATSHVP.

Belongs to the TrpF family.

The enzyme catalyses N-(5-phospho-beta-D-ribosyl)anthranilate = 1-(2-carboxyphenylamino)-1-deoxy-D-ribulose 5-phosphate. It functions in the pathway amino-acid biosynthesis; L-tryptophan biosynthesis; L-tryptophan from chorismate: step 3/5. The protein is N-(5'-phosphoribosyl)anthranilate isomerase of Nitrobacter winogradskyi (strain ATCC 25391 / DSM 10237 / CIP 104748 / NCIMB 11846 / Nb-255).